The following is a 384-amino-acid chain: Lipid-A-disaccharide synthase (384 aa).

This sequence belongs to the LpxB family.

The enzyme catalyses a lipid X + a UDP-2-N,3-O-bis[(3R)-3-hydroxyacyl]-alpha-D-glucosamine = a lipid A disaccharide + UDP + H(+). Its pathway is bacterial outer membrane biogenesis; LPS lipid A biosynthesis. Its function is as follows. Condensation of UDP-2,3-diacylglucosamine and 2,3-diacylglucosamine-1-phosphate to form lipid A disaccharide, a precursor of lipid A, a phosphorylated glycolipid that anchors the lipopolysaccharide to the outer membrane of the cell. This is Lipid-A-disaccharide synthase from Neisseria meningitidis serogroup C / serotype 2a (strain ATCC 700532 / DSM 15464 / FAM18).